Consider the following 136-residue polypeptide: uncharacterized protein (136 aa).

This is an uncharacterized protein from Methanocaldococcus jannaschii (strain ATCC 43067 / DSM 2661 / JAL-1 / JCM 10045 / NBRC 100440) (Methanococcus jannaschii).